A 289-amino-acid chain; its full sequence is Protease HtpX homolog (289 aa).

2 helical membrane-spanning segments follow: residues 5–27 and 40–60; these read LWVRTGLLMAFLTGLLVGIGYLI and ALFMNFFSYWFSDSIVLSWYN. His-133 is a binding site for Zn(2+). Glu-134 is an active-site residue. His-137 is a Zn(2+) binding site. The next 2 membrane-spanning stretches (helical) occupy residues 143–163 and 181–201; these read TLIQTIAAVLAGAIMVLVNFA and IVALILAIILAPIAATLIQLA. Glu-207 lines the Zn(2+) pocket.

It belongs to the peptidase M48B family. It depends on Zn(2+) as a cofactor.

It is found in the cell membrane. The polypeptide is Protease HtpX homolog (Pyrococcus furiosus (strain ATCC 43587 / DSM 3638 / JCM 8422 / Vc1)).